A 248-amino-acid polypeptide reads, in one-letter code: 14-3-3 protein sigma (248 aa).

Phosphoserine occurs at positions 5, 74, and 248.

This sequence belongs to the 14-3-3 family. In terms of assembly, homodimer. Interacts with KRT17 and SAMSN1. Found in a complex with XPO7, EIF4A1, ARHGAP1, VPS26A, VPS29 and VPS35. Interacts with GAB2. Interacts with SRPK2. Interacts with COPS6. Interacts with COP1; this interaction leads to proteasomal degradation. Interacts with the 'Thr-369' phosphorylated form of DAPK2. Interacts with PI4KB. Interacts with SLITRK1. Interacts with LRRK2; this interaction is dependent on LRRK2 phosphorylation. Interacts with PKP3 (via N-terminus); the interaction maintains the cytoplasmic pool of PKP3, facilitates PKP3 exchange at desmosomes and restricts PKP3 localization to existing desmosome cell junctions. Interacts with LCP2. In terms of processing, ubiquitinated. Ubiquitination by RFFL induces proteasomal degradation and indirectly regulates p53/TP53 activation. As to expression, present mainly in tissues enriched in stratified squamous keratinizing epithelium.

The protein resides in the cytoplasm. It localises to the nucleus. Its subcellular location is the secreted. Functionally, adapter protein implicated in the regulation of a large spectrum of both general and specialized signaling pathways. Binds to a large number of partners, usually by recognition of a phosphoserine or phosphothreonine motif. Binding generally results in the modulation of the activity of the binding partner. Promotes cytosolic retention of GBP1 GTPase by binding to phosphorylated GBP1, thereby inhibiting the innate immune response. Also acts as a TP53/p53-regulated inhibitor of G2/M progression. When bound to KRT17, regulates protein synthesis and epithelial cell growth by stimulating Akt/mTOR pathway. Acts to maintain desmosome cell junction adhesion in epithelial cells via interacting with and sequestering PKP3 to the cytoplasm, thereby restricting its translocation to existing desmosome structures and therefore maintaining desmosome protein homeostasis. Also acts to facilitate PKP3 exchange at desmosome plaques, thereby maintaining keratinocyte intercellular adhesion. May also regulate MDM2 autoubiquitination and degradation and thereby activate p53/TP53. The sequence is that of 14-3-3 protein sigma (SFN) from Homo sapiens (Human).